A 76-amino-acid polypeptide reads, in one-letter code: Defensin-like protein 164 (76 aa).

An N-terminal signal peptide occupies residues 1–25 (MAKLLCSYLFICMFVLSGFLVFSSA). 4 disulfide bridges follow: cysteine 31-cysteine 76, cysteine 41-cysteine 61, cysteine 46-cysteine 70, and cysteine 50-cysteine 72.

Belongs to the DEFL family.

The protein localises to the secreted. In Arabidopsis thaliana (Mouse-ear cress), this protein is Defensin-like protein 164 (LCR38).